The following is a 393-amino-acid chain: Prokineticin receptor 1 (393 aa).

At 1-63 (MEITMGVMDE…NSRTFFAAKI (63 aa)) the chain is on the extracellular side. 3 N-linked (GlcNAc...) asparagine glycosylation sites follow: N11, N14, and N36. A helical transmembrane segment spans residues 64-84 (VIGMALVGIMLVCGIGNFIFI). Over 85 to 98 (AALARYKKLRNLTN) the chain is Cytoplasmic. A helical membrane pass occupies residues 99–119 (LLIANLAISDFLVAIVCCPFE). Residues 120-145 (MDYYVVRQLSWEHGHVLCASVNYLRT) lie on the Extracellular side of the membrane. C137 and C217 are oxidised to a cystine. The chain crosses the membrane as a helical span at residues 146–166 (VSLYVSTNALLAIAIDRYLAI). Residues 167–179 (VHPLRPRMKYQTA) lie on the Cytoplasmic side of the membrane. Residues 180–200 (TGLIALVWVVSILVAIPSAYF) form a helical membrane-spanning segment. The Extracellular portion of the chain corresponds to 201–232 (TTETVLVIVKSQEKIFCGQIWPVDQQIYYKSY). Residues 233 to 253 (FLFIFGIEFVGPVVTMTLCYA) form a helical membrane-spanning segment. Residues 254-282 (RISRELWFKAVPGFQTEQIRKRLRCRRKT) are Cytoplasmic-facing. Residues 283–303 (VLVLMCILTAYVLCWAPFYGF) traverse the membrane as a helical segment. The Extracellular segment spans residues 304-322 (AIVRDFFPTVFVKEKHYLT). The chain crosses the membrane as a helical span at residues 323-343 (AFYVVECIAMSNSMINTVCFV). Topologically, residues 344-393 (TVKNNTIKYFKKIMLLHWKASYNGSKSSGDLDLKTTGVPATEEVDCIGLK) are cytoplasmic.

This sequence belongs to the G-protein coupled receptor 1 family.

It is found in the cell membrane. Functionally, receptor for prokineticin 1. Exclusively coupled to the G(q) subclass of heteromeric G proteins. Activation leads to mobilization of calcium, stimulation of phosphoinositide turnover and activation of p44/p42 mitogen-activated protein kinase. May play a role during early pregnancy. This Bos taurus (Bovine) protein is Prokineticin receptor 1 (PROKR1).